The primary structure comprises 309 residues: Virulence regulon transcriptional activator VirB (309 aa).

Positions 152 to 171 form a DNA-binding region, H-T-H motif; the sequence is KDIAKKENLSRAKVTRAFQA.

This sequence belongs to the ParB family.

Transcription activator for the invasion antigens IpaB, IpaC and IpaD. VirB is itself regulated by VirF. This is Virulence regulon transcriptional activator VirB (virB) from Shigella flexneri.